Reading from the N-terminus, the 422-residue chain is Dihydroorotase (422 aa).

Zn(2+)-binding residues include histidine 59 and histidine 61. Substrate-binding positions include 61 to 63 (HFR) and asparagine 93. Zn(2+) is bound by residues aspartate 150, histidine 177, and histidine 230. Substrate is bound at residue asparagine 276. Aspartate 303 contacts Zn(2+). Aspartate 303 is an active-site residue. Histidine 307 contributes to the substrate binding site.

Belongs to the metallo-dependent hydrolases superfamily. DHOase family. Class I DHOase subfamily. Zn(2+) is required as a cofactor.

The catalysed reaction is (S)-dihydroorotate + H2O = N-carbamoyl-L-aspartate + H(+). It functions in the pathway pyrimidine metabolism; UMP biosynthesis via de novo pathway; (S)-dihydroorotate from bicarbonate: step 3/3. Its function is as follows. Catalyzes the reversible cyclization of carbamoyl aspartate to dihydroorotate. In Streptococcus thermophilus (strain CNRZ 1066), this protein is Dihydroorotase.